Consider the following 185-residue polypeptide: Putative tyrosine-protein phosphatase OCA1 (185 aa).

A Tyrosine-protein phosphatase domain is found at Asn-18 to Ser-178. Residue Cys-116 is the Phosphocysteine intermediate of the active site.

This sequence belongs to the protein-tyrosine phosphatase family.

It is found in the cytoplasm. It carries out the reaction O-phospho-L-tyrosyl-[protein] + H2O = L-tyrosyl-[protein] + phosphate. Putative tyrosine-protein phosphatase required for protection against superoxide stress. The protein is Putative tyrosine-protein phosphatase OCA1 (OCA1) of Meyerozyma guilliermondii (strain ATCC 6260 / CBS 566 / DSM 6381 / JCM 1539 / NBRC 10279 / NRRL Y-324) (Yeast).